Here is a 53-residue protein sequence, read N- to C-terminus: Large ribosomal subunit protein eL40 (53 aa).

The protein belongs to the eukaryotic ribosomal protein eL40 family.

The polypeptide is Large ribosomal subunit protein eL40 (Staphylothermus marinus (strain ATCC 43588 / DSM 3639 / JCM 9404 / F1)).